Here is a 51-residue protein sequence, read N- to C-terminus: Insulin (51 aa).

Disulfide bonds link Cys8-Cys37, Cys20-Cys50, and Cys36-Cys41.

Belongs to the insulin family. Heterodimer of a B chain and an A chain linked by two disulfide bonds.

Its subcellular location is the secreted. Functionally, insulin decreases blood glucose concentration. It increases cell permeability to monosaccharides, amino acids and fatty acids. It accelerates glycolysis, the pentose phosphate cycle, and glycogen synthesis in liver. The polypeptide is Insulin (Seriola quinqueradiata (Five-ray yellowtail)).